The sequence spans 55 residues: Large ribosomal subunit protein eL37 (55 aa).

4 residues coordinate Zn(2+): C20, C23, C35, and C38. The C4-type zinc finger occupies 20–38 (CRRCGKNSYHKRHHRCSSC).

This sequence belongs to the eukaryotic ribosomal protein eL37 family. It depends on Zn(2+) as a cofactor.

Binds to the 23S rRNA. The polypeptide is Large ribosomal subunit protein eL37 (Cenarchaeum symbiosum (strain A)).